A 1905-amino-acid polypeptide reads, in one-letter code: Bromodomain adjacent to zinc finger domain protein 2A (1905 aa).

Disordered stretches follow at residues 1–59 (MEME…NGLS) and 362–434 (TSIF…PTTS). Polar residues-rich tracts occupy residues 35-59 (TNGSPMNFPQQGKSLNGDVNVNGLS), 379-391 (LQDNSFDLNNGSD), and 399-420 (TQSSDFPPSLTQPAPDQSSTIQ). At Thr507 the chain carries Phosphothreonine. Ser509 bears the Phosphoserine mark. The MBD domain maps to 546 to 617 (IATPEEVRLP…EHFSFSPRMP (72 aa)). Position 548 is a phosphothreonine (Thr548). The residue at position 613 (Ser613) is a Phosphoserine. The tract at residues 648-792 (ITGKRGRPRN…KEKEEVTKAK (145 aa)) is disordered. 2 DNA-binding regions (a.T hook) span residues 649 to 661 (TGKRGRPRNTEKA) and 670 to 682 (KRGRGRPPKVKIT). The span at 656–668 (RNTEKAKTKEVPK) shows a compositional bias: basic and acidic residues. Basic residues predominate over residues 669–678 (VKRGRGRPPK). At Lys680 the chain carries N6-acetyllysine; by KAT8. Positions 686–709 (NKTDNRPLKKLEAQETLNEEDKAK) are enriched in basic and acidic residues. A coiled-coil region spans residues 693–792 (LKKLEAQETL…KEKEEVTKAK (100 aa)). Over residues 710 to 721 (IAKSKKKMRQKV) the composition is skewed to basic residues. The span at 725–734 (ECQTTIQGQA) shows a compositional bias: polar residues. Basic and acidic residues-rich tracts occupy residues 739–748 (KQETKSLKQK) and 756–792 (AEKEKGKTKQEKLKEKVKREKKEKVKMKEKEEVTKAK). Position 799 is an N6-acetyllysine (Lys799). Positions 848-913 (SGAFSDCLTI…LKAALHDPGF (66 aa)) constitute a DDT domain. Residue Lys866 forms a Glycyl lysine isopeptide (Lys-Gly) (interchain with G-Cter in SUMO2) linkage. Ser1051 bears the Phosphoserine mark. Residues Lys1150 and Lys1172 each participate in a glycyl lysine isopeptide (Lys-Gly) (interchain with G-Cter in SUMO2) cross-link. 3 disordered regions span residues 1178-1220 (SNTT…PQAQ), 1283-1318 (LSSSVLTPDSSPGKLDPAPSQPPEEPEPDEAESSPD), and 1330-1412 (MPCN…RPPS). Phosphoserine is present on Ser1184. The a.T hook 3 DNA-binding region spans 1186–1198 (ARARGRPRKTKPG). The segment covering 1283 to 1293 (LSSSVLTPDSS) has biased composition (low complexity). Acidic residues predominate over residues 1306–1315 (EEPEPDEAES). The span at 1345–1359 (DQPTPSPQQLASSKP) shows a compositional bias: polar residues. The residue at position 1397 (Ser1397) is a Phosphoserine. Positions 1404 to 1416 (PKRRGRPPSKFFK) form a DNA-binding region, a.T hook 4. At Ser1559 the chain carries Phosphoserine. Residues Lys1676 and Lys1709 each participate in a glycyl lysine isopeptide (Lys-Gly) (interchain with G-Cter in SUMO2) cross-link. The segment at 1676–1726 (KVTCLVCRKGDNDEFLLLCDGCDRGCHIYCHRPKMEAVPEGDWFCTVCLAQ) adopts a PHD-type zinc-finger fold. 2 disordered regions span residues 1734 to 1755 (QKPGFPKRGQKRKSGYSLNFSE) and 1769 to 1789 (ESPAAGPRYSEEGLSPSKRRR). A phosphoserine mark is found at Ser1747, Ser1770, Ser1783, and Ser1785. In terms of domain architecture, Bromo spans 1793–1897 (RNHHSDLTFC…RFFESRWEEF (105 aa)).

The protein belongs to the WAL family. As to quaternary structure, component of the NoRC-1 ISWI chromatin remodeling complex at least composed of SMARCA1 and BAZ2A/TIP5, which regulates the spacing of histone octamers on the DNA template to facilitate access to DNA. Within the NoRC-1 ISWI chromatin remodeling complex interacts with SMARCA1; the interaction is direct. Component of the NoRC-5 ISWI chromatin remodeling complex (also called the NoRC nucleolar-remodeling complex), at least composed of SMARCA5/SNF2H and BAZ2A/TIP5, which regulates the spacing of histone octamers on the DNA template to facilitate access to DNA. Within the NoRC-5 ISWI chromatin remodeling complexes interacts with SMARCA5/SNF2H; the interaction is direct. Interacts with TTF1; the interaction is required for recruitment of the NoRC-5 ISWI chromatin remodeling complex to rDNA. Interacts with HDAC1. Interacts with SIN3A. Interacts with DNMT1 and DNM3B. Interacts with BEND3 and USP21. In terms of processing, acetylation at Lys-680 by KAT8/MOF promotes its dissociation from pRNA, affecting heterochromatin formation, nucleosome positioning and rDNA silencing. Deacetylation by SIRT1 in late S phase enhances pRNA-binding, allowing de novo DNA methylation and heterochromatin formation. Acetylation is high during S phase and declines to background levels in late S phase when the silent copies of rRNA genes are replicated. Ubiquitinated. Deubiquitinated by USP21 leading to its stabilization. As to expression, expressed at moderate levels in most tissues analyzed, including heart, brain, placenta, lung, skeletal muscle, kidney and pancreas.

It localises to the nucleus. The protein localises to the nucleolus. Regulatory subunit of the ATP-dependent NoRC-1 and NoRC-5 ISWI chromatin remodeling complexes, which form ordered nucleosome arrays on chromatin and facilitate access to DNA during DNA-templated processes such as DNA replication, transcription, and repair. Both complexes regulate the spacing of nucleosomes along the chromatin and have the ability to slide mononucleosomes to the center of a DNA template. Directly stimulates the ATPase activity of SMARCA5 in the NoRC-5 ISWI chromatin remodeling complex. The NoRC-1 ISWI chromatin remodeling complex has a lower ATP hydrolysis rate than the NoRC-5 ISWI chromatin remodeling complex. Within the NoRC-5 ISWI chromatin remodeling complex, mediates silencing of a fraction of rDNA by recruiting histone-modifying enzymes and DNA methyltransferases, leading to heterochromatin formation and transcriptional silencing. In the complex, it plays a central role by being recruited to rDNA and by targeting chromatin modifying enzymes such as HDAC1, leading to repress RNA polymerase I transcription. Recruited to rDNA via its interaction with TTF1 and its ability to recognize and bind histone H4 acetylated on 'Lys-16' (H4K16ac), leading to deacetylation of H4K5ac, H4K8ac, H4K12ac but not H4K16ac. Specifically binds pRNAs, 150-250 nucleotide RNAs that are complementary in sequence to the rDNA promoter; pRNA-binding is required for heterochromatin formation and rDNA silencing. The protein is Bromodomain adjacent to zinc finger domain protein 2A (BAZ2A) of Homo sapiens (Human).